Consider the following 450-residue polypeptide: Keratin, type I cytoskeletal 25 (450 aa).

Positions 1-23 are enriched in low complexity; it reads MSLRLSSASRRSCPRPTTGSLRL. The disordered stretch occupies residues 1–26; the sequence is MSLRLSSASRRSCPRPTTGSLRLSGG. The tract at residues 1–78 is head; it reads MSLRLSSASR…VNERGLLSGN (78 aa). The segment at 79–114 is coil 1A; sequence EKVTMQNLNDRLASYLDSVHALEEANADLEQKIKGW. The region spanning 79-394 is the IF rod domain; that stretch reads EKVTMQNLND…LLIGGDDGAC (316 aa). The interval 115–136 is linker 1; that stretch reads YEKFGPGSCRGLDHDYSRYFPI. A coil 1B region spans residues 137 to 228; it reads IDDLKNQIIA…KNHKEEMQVL (92 aa). Residues 229–251 form a linker 12 region; sequence QCAAGGNVNVEMNAAPGVDLTVL. Residues 252-390 are coil 2; that stretch reads LNNMRAEYEA…ETYCLLIGGD (139 aa). Positions 391 to 450 are tail; the sequence is DGACKSGGYKSKDYGSGNVGSQVKDSAKAIVVKKVLEEVDQRSKILTTRLRSLEEKSQSN. Phosphoserine is present on Ser-442.

This sequence belongs to the intermediate filament family. In terms of assembly, heterodimer of a type I and a type II keratin. Heterodimer with type II keratin KRT5 leading to the formation of keratin intermediate filament (KIF) network. Interacts with KRT6A to form filaments.

The protein resides in the cytoplasm. In terms of biological role, essential for the proper assembly of type I and type II keratin protein complexes and formation of keratin intermediate filaments in the inner root sheath (irs). Plays a role in the cytoskeleton organization. The protein is Keratin, type I cytoskeletal 25 (KRT25) of Pan troglodytes (Chimpanzee).